The primary structure comprises 93 residues: Pyrimidine/purine nucleoside phosphorylase (93 aa).

Belongs to the nucleoside phosphorylase PpnP family.

The catalysed reaction is a purine D-ribonucleoside + phosphate = a purine nucleobase + alpha-D-ribose 1-phosphate. The enzyme catalyses adenosine + phosphate = alpha-D-ribose 1-phosphate + adenine. It carries out the reaction cytidine + phosphate = cytosine + alpha-D-ribose 1-phosphate. It catalyses the reaction guanosine + phosphate = alpha-D-ribose 1-phosphate + guanine. The catalysed reaction is inosine + phosphate = alpha-D-ribose 1-phosphate + hypoxanthine. The enzyme catalyses thymidine + phosphate = 2-deoxy-alpha-D-ribose 1-phosphate + thymine. It carries out the reaction uridine + phosphate = alpha-D-ribose 1-phosphate + uracil. It catalyses the reaction xanthosine + phosphate = alpha-D-ribose 1-phosphate + xanthine. Catalyzes the phosphorolysis of diverse nucleosides, yielding D-ribose 1-phosphate and the respective free bases. Can use uridine, adenosine, guanosine, cytidine, thymidine, inosine and xanthosine as substrates. Also catalyzes the reverse reactions. This is Pyrimidine/purine nucleoside phosphorylase from Aliivibrio salmonicida (strain LFI1238) (Vibrio salmonicida (strain LFI1238)).